A 227-amino-acid chain; its full sequence is Cytochrome c oxidase subunit 2 (227 aa).

The Mitochondrial intermembrane segment spans residues 1 to 14 (MAYPLQLGLQDATS). Residues 15–45 (PIMEELTSFHDHTLMIVFLISSLVLYIISSM) traverse the membrane as a helical segment. Topologically, residues 46-59 (LTTKMTHTNTMDAQ) are mitochondrial matrix. Residues 60–87 (GVETIWTILPAAILVLIALPSLRILYMM) form a helical membrane-spanning segment. Topologically, residues 88 to 227 (DEINNPALTV…HFENWSASMI (140 aa)) are mitochondrial intermembrane. Residues His-161, Cys-196, Glu-198, Cys-200, His-204, and Met-207 each coordinate Cu cation. Mg(2+) is bound at residue Glu-198.

This sequence belongs to the cytochrome c oxidase subunit 2 family. As to quaternary structure, component of the cytochrome c oxidase (complex IV, CIV), a multisubunit enzyme composed of 14 subunits. The complex is composed of a catalytic core of 3 subunits MT-CO1, MT-CO2 and MT-CO3, encoded in the mitochondrial DNA, and 11 supernumerary subunits COX4I, COX5A, COX5B, COX6A, COX6B, COX6C, COX7A, COX7B, COX7C, COX8 and NDUFA4, which are encoded in the nuclear genome. The complex exists as a monomer or a dimer and forms supercomplexes (SCs) in the inner mitochondrial membrane with NADH-ubiquinone oxidoreductase (complex I, CI) and ubiquinol-cytochrome c oxidoreductase (cytochrome b-c1 complex, complex III, CIII), resulting in different assemblies (supercomplex SCI(1)III(2)IV(1) and megacomplex MCI(2)III(2)IV(2)). Found in a complex with TMEM177, COA6, COX18, COX20, SCO1 and SCO2. Interacts with TMEM177 in a COX20-dependent manner. Interacts with COX20. Interacts with COX16. Cu cation serves as cofactor.

The protein localises to the mitochondrion inner membrane. It carries out the reaction 4 Fe(II)-[cytochrome c] + O2 + 8 H(+)(in) = 4 Fe(III)-[cytochrome c] + 2 H2O + 4 H(+)(out). Functionally, component of the cytochrome c oxidase, the last enzyme in the mitochondrial electron transport chain which drives oxidative phosphorylation. The respiratory chain contains 3 multisubunit complexes succinate dehydrogenase (complex II, CII), ubiquinol-cytochrome c oxidoreductase (cytochrome b-c1 complex, complex III, CIII) and cytochrome c oxidase (complex IV, CIV), that cooperate to transfer electrons derived from NADH and succinate to molecular oxygen, creating an electrochemical gradient over the inner membrane that drives transmembrane transport and the ATP synthase. Cytochrome c oxidase is the component of the respiratory chain that catalyzes the reduction of oxygen to water. Electrons originating from reduced cytochrome c in the intermembrane space (IMS) are transferred via the dinuclear copper A center (CU(A)) of subunit 2 and heme A of subunit 1 to the active site in subunit 1, a binuclear center (BNC) formed by heme A3 and copper B (CU(B)). The BNC reduces molecular oxygen to 2 water molecules using 4 electrons from cytochrome c in the IMS and 4 protons from the mitochondrial matrix. In Acomys ignitus (Fiery spiny mouse), this protein is Cytochrome c oxidase subunit 2 (MT-CO2).